Reading from the N-terminus, the 393-residue chain is MGYYSLTEVTAVQYAKEHGYFEKKANVVCHEIGDGNLNYVFKLDDGEKSIIIKQALPYAKVVGESWPLSIKRATIESKALQIFAKYVPEYVPVVYSHDEELAVTIIEDLSKLTITRKGLIDGEEYPLLSQHIGRFLANVLFYTSDFGLQSEEKRVLEGTFVNPDLCKITEDLVFTDPFGHYDTNDYESELQLAVDELWSDKTLKLKVAQYKYKFLTRKEALIHGDLHTGSIFSSPSETKVIDPEFATYGPFGFDIGQFIANLLLNALSREEEQRSVLFFHIEKTWSYFVDTFTKLWIGEGVEAYTKEKQWLPIILQNIFTDVVGFAGCELIRRTIGLAHVADLDEIANKETRIQAKKQALSLGRELIKYESKNADIQLFRALFQQTVSGGVKA.

ATP-binding positions include asparagine 38, lysine 53, and 107 to 109; that span reads EDL. Residue aspartate 225 coordinates substrate. Residue 242–244 coordinates ATP; the sequence is DPE. A substrate-binding site is contributed by arginine 332.

Belongs to the methylthioribose kinase family. In terms of assembly, homodimer.

The catalysed reaction is 5-(methylsulfanyl)-D-ribose + ATP = 5-(methylsulfanyl)-alpha-D-ribose 1-phosphate + ADP + H(+). The protein operates within amino-acid biosynthesis; L-methionine biosynthesis via salvage pathway; S-methyl-5-thio-alpha-D-ribose 1-phosphate from S-methyl-5'-thioadenosine (hydrolase route): step 2/2. Functionally, catalyzes the phosphorylation of methylthioribose into methylthioribose-1-phosphate. The chain is Methylthioribose kinase from Bacillus cereus (strain AH187).